A 193-amino-acid polypeptide reads, in one-letter code: MVEYILLIISTALINNFVLVKFLGLCPFMGVSKKVETAIGMGMATTFVLTVASLSAYLVETYLLIPLEAEFLRTLVFILVIAVIVQLTEMIVHKTSSALYRLLGIYLPLITTNCAVLGVALLNVNLSNNLVQSVLYGFGAAAGFSLVLVLFSALRERLVAADVPRAFQGASIALITAGLMSLAFMGFTGLVKI.

Transmembrane regions (helical) follow at residues 5–25 (ILLI…FLGL), 39–59 (IGMG…AYLV), 65–85 (IPLE…AVIV), 102–122 (LLGI…VALL), 134–154 (VLYG…FSAL), and 171–191 (SIAL…TGLV).

The protein belongs to the NqrDE/RnfAE family. As to quaternary structure, the complex is composed of six subunits: RnfA, RnfB, RnfC, RnfD, RnfE and RnfG.

The protein localises to the cell inner membrane. Functionally, part of a membrane-bound complex that couples electron transfer with translocation of ions across the membrane. The protein is Ion-translocating oxidoreductase complex subunit A of Glaesserella parasuis serovar 5 (strain SH0165) (Haemophilus parasuis).